A 1418-amino-acid chain; its full sequence is JmjC domain-containing histone demethylation protein 1 (1418 aa).

Disordered regions lie at residues 1–86 (MIGA…SSST), 102–162 (APLS…STFD), and 308–329 (GADR…SDEN). The span at 44 to 60 (WIDRGDSQAASYDRDRV) shows a compositional bias: basic and acidic residues. The segment covering 61 to 71 (TSNNDVYSSTN) has biased composition (polar residues). The span at 127 to 139 (STERPAKRPRSEK) shows a compositional bias: basic and acidic residues. Positions 143–162 (PLHQPQTTVAPDANPSSTFD) are enriched in polar residues. Residues 308-321 (GADRASLDVPPRGD) show a composition bias toward basic and acidic residues. The PHD-type zinc finger occupies 331–391 (QANCAACNLV…KFICRRCRPI (61 aa)). One can recognise a JmjC domain in the interval 588 to 746 (VSQSKLGKLI…MQIKVAKIEK (159 aa)). A substrate-binding site is contributed by Thr639. His642 and Asp644 together coordinate Fe cation. Residue Lys659 coordinates substrate. His714 serves as a coordination point for Fe cation. Disordered stretches follow at residues 891 to 964 (PQWT…TVEI), 1090 to 1118 (NAAT…CDDC), 1130 to 1195 (YGRI…HTQR), and 1250 to 1394 (KPTA…DEPD). Positions 907-925 (LTEKKPAGRPSRRSERNAE) are enriched in basic and acidic residues. Composition is skewed to basic and acidic residues over residues 1130 to 1143 (YGRI…ERSK) and 1186 to 1195 (AEGDMSHTQR). Over residues 1250-1263 (KPTASLVSPPTSQA) the composition is skewed to polar residues. Low complexity predominate over residues 1341 to 1352 (SSKKPASRPSSS).

This sequence belongs to the JHDM1 histone demethylase family. Requires Fe(2+) as cofactor.

It is found in the nucleus. It catalyses the reaction N(6),N(6)-dimethyl-L-lysyl(36)-[histone H3] + 2 2-oxoglutarate + 2 O2 = L-lysyl(36)-[histone H3] + 2 formaldehyde + 2 succinate + 2 CO2. In terms of biological role, histone demethylase that specifically demethylates 'Lys-36' of histone H3, thereby playing a central role in histone code. This chain is JmjC domain-containing histone demethylation protein 1 (jhd1), found in Aspergillus fumigatus (strain ATCC MYA-4609 / CBS 101355 / FGSC A1100 / Af293) (Neosartorya fumigata).